We begin with the raw amino-acid sequence, 128 residues long: Adrenodoxin (128 aa).

Ser3 is subject to Phosphoserine. Lys6 carries the N6-acetyllysine; alternate modification. Lys6 bears the N6-succinyllysine; alternate mark. Residues 7–111 (VTVNFINRDG…NMTVRVPDAV (105 aa)) form the 2Fe-2S ferredoxin-type domain. [2Fe-2S] cluster-binding residues include Cys46, Cys52, Cys55, and Cys92. Lys98 bears the N6-succinyllysine mark. Residue Ser117 is modified to Phosphoserine.

Belongs to the adrenodoxin/putidaredoxin family. Interacts with CYP11A1. [2Fe-2S] cluster serves as cofactor.

It localises to the mitochondrion matrix. Functionally, essential for the synthesis of various steroid hormones. Participates in the reduction of mitochondrial cytochrome P450 for steroidogenesis. Transfers electrons from adrenodoxin reductase to CYP11A1, a cytochrome P450 that catalyzes cholesterol side-chain cleavage. Does not form a ternary complex with adrenodoxin reductase and CYP11A1 but shuttles between the two enzymes to transfer electrons. The polypeptide is Adrenodoxin (FDX1) (Ovis aries (Sheep)).